The chain runs to 929 residues: Protocadherin gamma-B3 (929 aa).

Residues 1–30 (MGNSSGWRGPAGQRRMLFLFLLSLLDQALS) form the signal peptide. Cadherin domains lie at 31–133 (EPIR…PPTF), 134–242 (SQNI…PPVF), 243–347 (TQDM…APEI), 348–452 (TLAS…VPVF), 453–562 (HQAS…APLV), and 570–675 (EGSA…QPDL). At 31 to 691 (EPIRYAIPEE…SDPQAELQFH (661 aa)) the chain is on the extracellular side. Asn136 carries N-linked (GlcNAc...) asparagine glycosylation. Residues Asn419 and Asn545 are each glycosylated (N-linked (GlcNAc...) asparagine). The helical transmembrane segment at 692–712 (LVVALALISVLFLLAVILAIS) threads the bilayer. Topologically, residues 713 to 929 (LRLRCSSRPA…KKKSGKKEKK (217 aa)) are cytoplasmic. Disordered regions lie at residues 791–838 (NDNP…WPNN) and 899–929 (ATLT…KEKK). The span at 919-929 (NKKKSGKKEKK) shows a compositional bias: basic residues.

It localises to the cell membrane. Functionally, potential calcium-dependent cell-adhesion protein. May be involved in the establishment and maintenance of specific neuronal connections in the brain. In Homo sapiens (Human), this protein is Protocadherin gamma-B3 (PCDHGB3).